A 140-amino-acid chain; its full sequence is Lymphocyte antigen 6 complex locus protein G5c (140 aa).

The N-terminal stretch at 1 to 41 (MRFMAGPAGSQNPGPMCFHSSLQALYTVLLIVLVMMSLVFG) is a signal peptide. The UPAR/Ly6 domain occupies 60 to 140 (LRCYRCLLET…SQCCFLGFLQ (81 aa)). Intrachain disulfides connect Cys-62/Cys-89, Cys-65/Cys-74, Cys-81/Cys-107, and Cys-116/Cys-133. Asn-96 is a glycosylation site (N-linked (GlcNAc...) asparagine).

As to quaternary structure, forms oligomers. N-glycosylated.

It is found in the secreted. May have a role in hematopoietic cell differentiation. The sequence is that of Lymphocyte antigen 6 complex locus protein G5c (LY6G5C) from Macaca mulatta (Rhesus macaque).